The following is a 512-amino-acid chain: Tyrosine-protein kinase Lyn (512 aa).

The segment at 1–45 is disordered; the sequence is MGCIKSKRKDNLNDDEVDSKTQPVRNTDRTIYVRDPTSNKQQRPV. Gly-2 is lipidated: N-myristoyl glycine. Cys-3 carries the S-palmitoyl cysteine lipid modification. Ser-19 carries the post-translational modification Phosphoserine. Residues 63 to 123 form the SH3 domain; it reads EQGDIVVALY…PSNYVAKVNT (61 aa). An SH2 domain is found at 129–226; that stretch reads WFFKDITRKD…GLCRRLEKAC (98 aa). Residue Tyr-193 is modified to Phosphotyrosine. Phosphoserine is present on Ser-228. A Protein kinase domain is found at 247–501; the sequence is IKLVKKLGAG…YLQSVLDDFY (255 aa). ATP-binding positions include 253 to 261 and Lys-275; that span reads LGAGQFGEV. A phosphotyrosine mark is found at Tyr-306 and Tyr-316. The Proton acceptor role is filled by Asp-367. Tyr-397 is modified (phosphotyrosine; by autocatalysis). Phosphotyrosine occurs at positions 460 and 473. Phosphotyrosine; by autocatalysis, CSK and MATK is present on Tyr-508.

The protein belongs to the protein kinase superfamily. Tyr protein kinase family. SRC subfamily. In terms of assembly, interacts with TEC. Interacts (via SH2 domain) with FLT3 (tyrosine phosphorylated). Interacts with LIME1 and with CD79A upon activation of the B-cell antigen receptor. Interacts with the B-cell receptor complex. Interacts with phosphorylated THEMIS2. Interacts with EPOR. Interacts with MS4A2/FCER1B. Interaction (via the SH2 and SH3 domains) with MUC1 is stimulated by IL7 and the subsequent phosphorylation increases the binding between MUC1 and CTNNB1/beta-catenin. Interacts with ADAM15. Interacts with NDFIP2 and more weakly with NDFIP1. Interacts with FASLG. Interacts with KIT. Interacts with HCLS1. Interacts with FCGR2B. Interacts with FCGR1A; the interaction may be indirect. Interacts with CD19, CD22, CD79A and CD79B. Interacts (via SH3 domain) with CBLC, PPP1R15A and PDE4A. Interacts with TGFB1I1. Interacts (via SH3 domain) with PIK3R1, the regulatory subunit of phosphatidylinositol 3-kinase; this interaction enhances phosphatidylinositol 3-kinase activity. Interacts with CSF2RB, the common subunit of the IL3, IL5 and CSF2 receptors. Interacts with PAG1; identified in a complex with PAG1 and STAT3. Interacts with ABL1. Interacts with PTPN6/SHP-1. Interacts (via SH3 domain) with SCIMP (via proline-rich region). This interaction facilitates the phosphorylation of SCIMP on 'Tyr-96', which enhances binding of SCIMP to TLR4, and consequently the phosphorylation of TLR4 in response to stimulation by lipopolysaccharide in macrophages. Interacts with LPXN (via LD motif 3) and the interaction is induced upon B-cell antigen receptor (BCR) activation. Interacts (via SH3-domain) with ANKRD54 (via ankyrin repeat region) in an activation-independent status of LYN. Forms a multiprotein complex with ANKRD54 and HCLS1. Interacts (via SH2 and SH3 domains) with UNC119; leading to LYN activation. Interacts with CD36. Interacts with LYN. Interacts with SKAP1 and FYB1; this interaction promotes the phosphorylation of CLNK. Interacts with BCAR1/CAS and NEDD9/HEF1. Post-translationally, ubiquitinated by CBL, leading to its degradation. In terms of processing, autophosphorylated. Phosphorylated on tyrosine residues in response to KIT signaling. Phosphorylation at Tyr-397 is required for optimal activity. Phosphorylation at Tyr-508 inhibits kinase activity. Phosphorylated at Tyr-508 by CSK. Dephosphorylated by PTPRC/CD45. Becomes rapidly phosphorylated upon activation of the B-cell receptor and the immunoglobulin receptor FCGR1A. Phosphorylated in response to ITGB1 in B-cells. In terms of tissue distribution, detected in bone marrow-derived monocytes and macrophages (at protein level). Expressed predominantly in B-lymphoid and myeloid cells.

Its subcellular location is the cell membrane. It localises to the nucleus. The protein localises to the cytoplasm. The protein resides in the perinuclear region. It is found in the golgi apparatus. Its subcellular location is the membrane. The enzyme catalyses L-tyrosyl-[protein] + ATP = O-phospho-L-tyrosyl-[protein] + ADP + H(+). Its activity is regulated as follows. Subject to autoinhibition, mediated by intramolecular interactions between the SH2 domain and the C-terminal phosphotyrosine. Phosphorylation at Tyr-397 is required for optimal activity. Phosphorylated by CSK at Tyr-508; phosphorylation at Tyr-508 inhibits kinase activity. Kinase activity is modulated by dephosphorylation by PTPRC/CD45. Inhibited by dasatinib, PP2, and SU6656. Non-receptor tyrosine-protein kinase that transmits signals from cell surface receptors and plays an important role in the regulation of innate and adaptive immune responses, hematopoiesis, responses to growth factors and cytokines, integrin signaling, but also responses to DNA damage and genotoxic agents. Functions primarily as negative regulator, but can also function as activator, depending on the context. Required for the initiation of the B-cell response, but also for its down-regulation and termination. Plays an important role in the regulation of B-cell differentiation, proliferation, survival and apoptosis, and is important for immune self-tolerance. Acts downstream of several immune receptors, including the B-cell receptor, CD79A, CD79B, CD5, CD19, CD22, FCER1, FCGR2, FCGR1A, TLR2 and TLR4. Plays a role in the inflammatory response to bacterial lipopolysaccharide. Mediates the responses to cytokines and growth factors in hematopoietic progenitors, platelets, erythrocytes, and in mature myeloid cells, such as dendritic cells, neutrophils and eosinophils. Acts downstream of EPOR, KIT, MPL, the chemokine receptor CXCR4, as well as the receptors for IL3, IL5 and CSF2. Plays an important role in integrin signaling. Regulates cell proliferation, survival, differentiation, migration, adhesion, degranulation, and cytokine release. Involved in the regulation of endothelial activation, neutrophil adhesion and transendothelial migration. Down-regulates signaling pathways by phosphorylation of immunoreceptor tyrosine-based inhibitory motifs (ITIM), that then serve as binding sites for phosphatases, such as PTPN6/SHP-1, PTPN11/SHP-2 and INPP5D/SHIP-1, that modulate signaling by dephosphorylation of kinases and their substrates. Phosphorylates LIME1 in response to CD22 activation. Phosphorylates BTK, CBL, CD5, CD19, CD72, CD79A, CD79B, CSF2RB, DOK1, HCLS1, MS4A2/FCER1B, SYK and TEC. Phosphorylates PIRB at Tyr-794 and Tyr-824, which is required for PIRB interaction with PTPN6/SHP-1 and PTPN11/SHP-2. Promotes phosphorylation of SIRPA, PTPN6/SHP-1, PTPN11/SHP-2 and INPP5D/SHIP-1. Required for rapid phosphorylation of FER in response to FCER1 activation. Mediates KIT phosphorylation. Acts as an effector of EPOR (erythropoietin receptor) in controlling KIT expression and may play a role in erythroid differentiation during the switch between proliferation and maturation. Depending on the context, activates or inhibits several signaling cascades. Regulates phosphatidylinositol 3-kinase activity and AKT1 activation. Regulates activation of the MAP kinase signaling cascade, including activation of MAP2K1/MEK1, MAPK1/ERK2, MAPK3/ERK1, MAPK8/JNK1 and MAPK9/JNK2. Mediates activation of STAT5A and/or STAT5B. Phosphorylates LPXN on 'Tyr-72'. Kinase activity facilitates TLR4-TLR6 heterodimerization and signal initiation. Phosphorylates SCIMP on 'Tyr-96'; this enhances binding of SCIMP to TLR4, promoting the phosphorylation of TLR4, and a selective cytokine response to lipopolysaccharide in macrophages. Phosphorylates CLNK. Phosphorylates BCAR1/CAS and NEDD9/HEF1. The polypeptide is Tyrosine-protein kinase Lyn (Lyn) (Mus musculus (Mouse)).